A 308-amino-acid polypeptide reads, in one-letter code: L-lactate dehydrogenase 2 (308 aa).

Residues valine 14, aspartate 35, tyrosine 65, and glycine 79–alanine 80 contribute to the NAD(+) site. Arginine 88 is a substrate binding site. Serine 101 serves as a coordination point for NAD(+). Asparagine 120–aspartate 123 serves as a coordination point for substrate. Threonine 143 contributes to the NAD(+) binding site. Aspartate 148–arginine 151 provides a ligand contact to substrate. Histidine 175 acts as the Proton acceptor in catalysis. Threonine 225 contacts substrate.

The protein belongs to the LDH/MDH superfamily. LDH family. In terms of assembly, homotetramer.

It localises to the cytoplasm. The catalysed reaction is (S)-lactate + NAD(+) = pyruvate + NADH + H(+). It participates in fermentation; pyruvate fermentation to lactate; (S)-lactate from pyruvate: step 1/1. Functionally, catalyzes the conversion of lactate to pyruvate. This chain is L-lactate dehydrogenase 2, found in Lactobacillus johnsonii (strain CNCM I-12250 / La1 / NCC 533).